The chain runs to 512 residues: Ribonuclease Y (512 aa).

A helical membrane pass occupies residues F3–I23. One can recognise a KH domain in the interval T202–L265. The HD domain occupies V328 to A421.

It belongs to the RNase Y family.

It is found in the cell membrane. Functionally, endoribonuclease that initiates mRNA decay. This Desulforamulus reducens (strain ATCC BAA-1160 / DSM 100696 / MI-1) (Desulfotomaculum reducens) protein is Ribonuclease Y.